The chain runs to 498 residues: Probable cytosol aminopeptidase (498 aa).

2 residues coordinate Mn(2+): K267 and D272. The active site involves K279. 3 residues coordinate Mn(2+): D290, D349, and E351. R353 is a catalytic residue.

This sequence belongs to the peptidase M17 family. Mn(2+) is required as a cofactor.

The protein resides in the cytoplasm. It carries out the reaction Release of an N-terminal amino acid, Xaa-|-Yaa-, in which Xaa is preferably Leu, but may be other amino acids including Pro although not Arg or Lys, and Yaa may be Pro. Amino acid amides and methyl esters are also readily hydrolyzed, but rates on arylamides are exceedingly low.. The enzyme catalyses Release of an N-terminal amino acid, preferentially leucine, but not glutamic or aspartic acids.. Its function is as follows. Presumably involved in the processing and regular turnover of intracellular proteins. Catalyzes the removal of unsubstituted N-terminal amino acids from various peptides. The sequence is that of Probable cytosol aminopeptidase from Dechloromonas aromatica (strain RCB).